Here is a 3295-residue protein sequence, read N- to C-terminus: Toxin CdiA (3295 aa).

The tract at residues 33 to 366 (PSSGVGHTQR…GKGNTQLTTA (334 aa)) is two-partner system transport domain (TPS). A helical transmembrane segment spans residues 55-75 (LLIALGCISLSAQAAIVADGS). The interval 353–1574 (GVLYGKGNTQ…LLVYAKTLTN (1222 aa)) is FHA-1. Residues 1165–1185 (PPSSIPPSSTQSSSTQASASP) are disordered. A receptor binding domain (RBD) region spans residues 1575–1796 (RRQILTATTD…LKTDKGDYAP (222 aa)). Residues 1797–1977 (GPEAALSLAN…GVKPGDLRAN (181 aa)) form a YP domain region. Residues 1806–1831 (NISPPSSLDATGPRGVPPPSDDLNRT) are disordered. Positions 1998-2035 (GAISASNNLQISMAKDITLNNRCGLLQAGNHLQLSTLN) are periplasmic FHA-1 repeat (pFR). Positions 2022 to 2676 (LLQAGNHLQL…DRDNYDAKQS (655 aa)) are FHA-2. Disordered regions lie at residues 2260-2292 (TSQT…EGRS) and 2823-2847 (QQNV…FDKE). Polar residues predominate over residues 2823–2838 (QQNVDDLSRDTGNANG). The VENN CT cleavage motif motif lies at 3073 to 3076 (VENN). The tract at residues 3073 to 3295 (VENNLLGGNE…QKKDAMEDSK (223 aa)) is CT domain. A disordered region spans residues 3276–3295 (SSEFGSSLIQQKKDAMEDSK). Basic and acidic residues predominate over residues 3286-3295 (QKKDAMEDSK).

This sequence in the N-terminal section; belongs to the CdiA toxin family. As to quaternary structure, probably interacts with cognate immunity protein CdiI.

It localises to the membrane. The protein resides in the target cell. Its subcellular location is the target cell cytoplasm. Toxic component of a toxin-immunity protein module, which functions as a cellular contact-dependent growth inhibition (CDI) system. CDI modules allow bacteria to communicate with and inhibit the growth of closely related neighboring bacteria in a contact-dependent fashion. CDI is neutralized by its cognate immunity protein CdiI, but not by non-cognate CdiI from other bacteria. Its function is as follows. The CdiA protein is thought to be exported from the cell through the central lumen of CdiB, the other half of its two-partner system (TPS). The TPS domain probably remains associated with CdiB while the FHA-1 domain forms an extended filament with the receptor-binding domain (RBD) at its extremity; in the secretion arrested state the C-terminus of the RBD and YP domains form a hairpin-like structure as the FHA-2, PT and CT domains are periplasmic. The YP domain is probably responsible for this arrest at the point where it re-enters the host cell periplasm. Upon binding to a target cell outer membrane receptor a signal is transmitted to activate secretion. The filament elongates slightly, the rest of CdiA is secreted and the FHA-2 domain becomes stably associated with the target cell's outer membrane where it facilitates entry of the toxic CT domain into the target cell periplasm. From there the toxic CT domain is cleaved and gains access to the target cell cytoplasm via an inner membrane protein. In Yersinia pestis, this protein is Toxin CdiA.